The chain runs to 420 residues: Sodium/proton antiporter 2 (420 aa).

Helical transmembrane passes span 25–45, 60–80, 94–114, 136–156, 173–193, 221–241, 242–262, 285–305, 321–341, 363–383, and 400–420; these read IALL…SVEI, IVFY…HQGF, ILLW…DNLT, LGAV…IGDV, IKNL…LMSL, LVFG…SLTG, LPPY…TDVI, GALF…AGIL, LIAS…LVAA, FCAG…VIFM, and FAFA…NFPL.

The protein belongs to the NhaD Na(+)/H(+) (TC 2.A.62) antiporter family.

It localises to the membrane. Functionally, na(+)/H(+) antiporter that extrudes sodium in exchange for external protons. The protein is Sodium/proton antiporter 2 of Arabidopsis thaliana (Mouse-ear cress).